The sequence spans 523 residues: Na(+)/H(+) antiporter NhaB (523 aa).

Transmembrane regions (helical) follow at residues 28-48 (FLIINPFIVALNPFVAGWLLV), 51-71 (FIFTLSMALKCYPLLPGGLLA), 89-109 (LSANLEVLLLLMFMVAGIYFV), 137-157 (MAAFLSAFLDALTVVAVVISI), 237-257 (FFIRMSAVSIPVLICGLATCV), 302-322 (AIICVWLIVGLAFHLAAVGLI), 347-367 (TESLPFTALLSVFFVVVAVII), 390-410 (LFYIANGVLSMVSDNVFVGTV), 445-465 (VATPNGQAAFLFLLTSTLAPL), and 476-496 (MALPYTIVLAGVGLLSTMYLL).

It belongs to the NhaB Na(+)/H(+) (TC 2.A.34) antiporter family.

It localises to the cell inner membrane. It catalyses the reaction 2 Na(+)(in) + 3 H(+)(out) = 2 Na(+)(out) + 3 H(+)(in). Functionally, na(+)/H(+) antiporter that extrudes sodium in exchange for external protons. This Tolumonas auensis (strain DSM 9187 / NBRC 110442 / TA 4) protein is Na(+)/H(+) antiporter NhaB.